The sequence spans 565 residues: Putative pentatricopeptide repeat-containing protein At3g05240 (565 aa).

13 PPR repeats span residues 37-70 (NVIP…IDCP), 71-105 (SVYI…GYSP), 106-140 (DYFT…GFEV), 141-171 (NMYV…IPQW), 172-206 (NVVA…GVKA), 207-241 (NETI…GFDP), 250-280 (NVIL…MPER), 281-315 (TLVS…GIAP), 316-350 (DKVT…GFVK), 351-381 (DAAI…LEKK), 382-416 (DTIA…GNAT), 418-448 (DGIT…MRDL), and 454-484 (TVEH…MPVK). The tract at residues 489–564 (IWGALLNGCD…VLGHSSVETM (76 aa)) is type E motif.

This sequence belongs to the PPR family. PCMP-E subfamily.

In Arabidopsis thaliana (Mouse-ear cress), this protein is Putative pentatricopeptide repeat-containing protein At3g05240 (PCMP-E82).